A 479-amino-acid chain; its full sequence is MNHALRRATLGLSPGLRASRLQQSFAKHQIPAVYRCEAASTPLQRAFTTSRCFRQETAAESEKDDAARREEQSERARKRQARNVTSGSSAQTLENDRPWHRADSGADPDAPKDVPENKDMKKGRLLTTPTRLLKLILPMPFHPEQEHVNRPVEGDVDDAGATVEPLALLIHPHQPLSYLERLIQAEIPPVQYKGREKLPDIVFRAEADQNEQDGRKDDNKKKDNANVASYSGLGHEGPTNKEANWVRWSGSTEIGDFIRDAARGREFAINVEGFDRELRVAVPSFRDRTYYMRMTLRRMSRDIESMSKVKNECDTLAHQGAHRLAQGGFAALAGWWGVVYYVTFHTQAGWDLVEPVTYLAGLTTVMGAYLWFLYISRDLSYKAAMKVTVSKRQAALYQERGFDQNRWDQIIHEANNLRKEIKIIASEYDVDWDEKKDLGGEEVKKVLEEEKQGRDGTKVTEGKDEDDGPGSSDKIKKKQ.

The N-terminal 54 residues, 1 to 54 (MNHALRRATLGLSPGLRASRLQQSFAKHQIPAVYRCEAASTPLQRAFTTSRCFR), are a transit peptide targeting the mitochondrion. Residues 55-323 (QETAAESEKD…DTLAHQGAHR (269 aa)) are Mitochondrial matrix-facing. Disordered regions lie at residues 56–125 (ETAA…KGRL) and 206–238 (EADQNEQDGRKDDNKKKDNANVASYSGLGHEGP). Residues 59 to 79 (AESEKDDAARREEQSERARKR) adopt a coiled-coil conformation. Basic and acidic residues predominate over residues 60 to 75 (ESEKDDAARREEQSER). Positions 83 to 93 (NVTSGSSAQTL) are enriched in polar residues. Basic and acidic residues-rich tracts occupy residues 94 to 122 (ENDRPWHRADSGADPDAPKDVPENKDMKK) and 206 to 224 (EADQNEQDGRKDDNKKKDN). Residues 324–344 (LAQGGFAALAGWWGVVYYVTF) form a helical membrane-spanning segment. Over 345–354 (HTQAGWDLVE) the chain is Mitochondrial intermembrane. The Selectivity filter signature appears at 350 to 358 (WDLVEPVTY). Residue glutamate 354 participates in Ca(2+) binding. The chain crosses the membrane as a helical span at residues 355 to 375 (PVTYLAGLTTVMGAYLWFLYI). The Mitochondrial matrix portion of the chain corresponds to 376 to 479 (SRDLSYKAAM…GSSDKIKKKQ (104 aa)). Positions 445-462 (KVLEEEKQGRDGTKVTEG) are enriched in basic and acidic residues. The disordered stretch occupies residues 445 to 479 (KVLEEEKQGRDGTKVTEGKDEDDGPGSSDKIKKKQ).

Belongs to the MCU (TC 1.A.77) family. Homotetramer, assembles in a dimer or dimers configuration with two interfaces.

Its subcellular location is the mitochondrion inner membrane. The enzyme catalyses Ca(2+)(in) = Ca(2+)(out). Its function is as follows. Highly selective calcium channel localized to the inner mitochondrial membrane, which mediates calcium uptake into the mitochondrial matrix. Mitochondrial calcium homeostasis plays key roles in cellular physiology and regulates ATP production, cytoplasmic calcium signals and activation of cell death pathways. Sufficient to operate as a pore-forming channel without the need of calcium-sensor or auxiliary subunit. This chain is Calcium uniporter protein, mitochondrial, found in Gibberella zeae (strain ATCC MYA-4620 / CBS 123657 / FGSC 9075 / NRRL 31084 / PH-1) (Wheat head blight fungus).